A 280-amino-acid chain; its full sequence is Ribosomal RNA small subunit methyltransferase A (280 aa).

Residues H15, L17, G42, E64, D89, and N109 each contribute to the S-adenosyl-L-methionine site.

Belongs to the class I-like SAM-binding methyltransferase superfamily. rRNA adenine N(6)-methyltransferase family. RsmA subfamily.

Its subcellular location is the cytoplasm. The catalysed reaction is adenosine(1518)/adenosine(1519) in 16S rRNA + 4 S-adenosyl-L-methionine = N(6)-dimethyladenosine(1518)/N(6)-dimethyladenosine(1519) in 16S rRNA + 4 S-adenosyl-L-homocysteine + 4 H(+). Its function is as follows. Specifically dimethylates two adjacent adenosines (A1518 and A1519) in the loop of a conserved hairpin near the 3'-end of 16S rRNA in the 30S particle. May play a critical role in biogenesis of 30S subunits. The polypeptide is Ribosomal RNA small subunit methyltransferase A (Prochlorococcus marinus (strain MIT 9303)).